A 672-amino-acid polypeptide reads, in one-letter code: DNA polymerase eta (672 aa).

A UmuC domain is found at 14-254; that stretch reads IAHVDMDCFY…LPIKKMKQLG (241 aa). The Mg(2+) site is built by Asp-18 and Met-19. Mn(2+) is bound by residues Asp-18 and Met-19. A 2'-deoxyribonucleoside 5'-triphosphate-binding residues include Tyr-23 and Arg-60. Asp-120 and Glu-121 together coordinate Mg(2+). Mn(2+) is bound by residues Asp-120 and Glu-121. Glu-121 serves as the catalytic Proton acceptor. DNA-binding regions lie at residues 318-325 and 362-383; these read KTFPGPRA and TLHA…PSKS. 2 disordered regions span residues 521-617 and 648-672; these read VSCP…TDWG and QFNT…PLNR. Polar residues-rich tracts occupy residues 523–544 and 570–586; these read CPSN…TQTK and YNAT…DSTV. Low complexity-rich tracts occupy residues 587–602 and 651–662; these read SSAS…SHNS and TGKSKGDGSTSS.

The protein belongs to the DNA polymerase type-Y family. As to quaternary structure, interacts with PCNA1 and PCNA2. The interaction with PCNA2 is required for translesion synthesis (TLS) to repair UV photoproducts. Requires Mg(2+) as cofactor. Mn(2+) is required as a cofactor. Constitutively expressed in roots, stems, leaves, flowers and siliques.

It localises to the nucleus. The catalysed reaction is DNA(n) + a 2'-deoxyribonucleoside 5'-triphosphate = DNA(n+1) + diphosphate. With respect to regulation, the enzyme in complex with the DNA substrate binds a third divalent metal cation. The binding of this third divalent cation, which is coordinated by water molecules and two oxygen atoms from DNA and dNTP, is essential for catalyzing the DNA synthesis. Error-free DNA polymerase specifically involved in DNA repair. Plays an important role in translesion synthesis (TLS), where the normal high fidelity DNA polymerases cannot proceed and DNA synthesis stalls. Plays an important role in the repair of UV-induced pyrimidine dimers and confers resistance to ultraviolet light. Depending on the context, it inserts the correct base, but may cause base transitions and transversions. Forms a Schiff base with 5'-deoxyribose phosphate at abasic sites, but does not have lyase activity. Targets POLI to replication foci. Exhibits cyclobutane dimer nonmutagenic bypass activity in vitro. The sequence is that of DNA polymerase eta (POLH) from Arabidopsis thaliana (Mouse-ear cress).